The following is a 224-amino-acid chain: Protein FMP52, mitochondrial (224 aa).

This sequence belongs to the FMP52 family.

It localises to the mitochondrion outer membrane. The protein is Protein FMP52, mitochondrial (FMP52) of Kluyveromyces lactis (strain ATCC 8585 / CBS 2359 / DSM 70799 / NBRC 1267 / NRRL Y-1140 / WM37) (Yeast).